A 544-amino-acid polypeptide reads, in one-letter code: POTE ankyrin domain family member B2 (544 aa).

ANK repeat units follow at residues 135–167 (QKRTALHLASANGNSEVVQLLLDRRCQLNVLDN), 168–200 (KKRTALIKAVQCQEDECVLMLLEHGADGNIQDE), 201–233 (YGNTALHYAIYNEDKLMAKALLLYGADIESKNK), 234–266 (CGLTPLLLGVHEQKQEVVKFLIKKKANLNALDR), and 267–299 (YGRTALILAVCCGSASIVNLLLEQNVDVSSQDL). Positions 332-457 (SSENSNPEQD…NTGISQDEIL (126 aa)) are disordered. Basic and acidic residues-rich tracts occupy residues 340–355 (QDLKLTSEEESQRLKV) and 364–375 (MSQEPEINKDCD). Polar residues predominate over residues 439–457 (TQKQLSEEQNTGISQDEIL).

Belongs to the POTE family.

The protein is POTE ankyrin domain family member B2 (POTEB2) of Homo sapiens (Human).